The primary structure comprises 209 residues: ATP phosphoribosyltransferase (209 aa).

Belongs to the ATP phosphoribosyltransferase family. Short subfamily. In terms of assembly, heteromultimer composed of HisG and HisZ subunits.

It localises to the cytoplasm. The enzyme catalyses 1-(5-phospho-beta-D-ribosyl)-ATP + diphosphate = 5-phospho-alpha-D-ribose 1-diphosphate + ATP. It participates in amino-acid biosynthesis; L-histidine biosynthesis; L-histidine from 5-phospho-alpha-D-ribose 1-diphosphate: step 1/9. Catalyzes the condensation of ATP and 5-phosphoribose 1-diphosphate to form N'-(5'-phosphoribosyl)-ATP (PR-ATP). Has a crucial role in the pathway because the rate of histidine biosynthesis seems to be controlled primarily by regulation of HisG enzymatic activity. This Sulfurimonas denitrificans (strain ATCC 33889 / DSM 1251) (Thiomicrospira denitrificans (strain ATCC 33889 / DSM 1251)) protein is ATP phosphoribosyltransferase.